A 99-amino-acid chain; its full sequence is MSSNEKIFSVLRAPRVSEKTARLQEISNQYVFEVSNEATKADVKAAVEQLFDVKVKAVNVVNVKGKSKSFRNRAGNRGNWRKAYVRLVDGQSIDVTAKA.

Belongs to the universal ribosomal protein uL23 family. As to quaternary structure, part of the 50S ribosomal subunit. Contacts protein L29, and trigger factor when it is bound to the ribosome.

One of the early assembly proteins it binds 23S rRNA. One of the proteins that surrounds the polypeptide exit tunnel on the outside of the ribosome. Forms the main docking site for trigger factor binding to the ribosome. The sequence is that of Large ribosomal subunit protein uL23 from Xanthomonas axonopodis pv. citri (strain 306).